A 256-amino-acid chain; its full sequence is Major prion protein (256 aa).

The N-terminal stretch at 1–24 is a signal peptide; it reads MVKSHIGSWILVLFVAMWSDVGLC. The tract at residues 25–41 is interaction with ADGRG6; the sequence is KKRPKPGGGWNTGGSRY. The tract at residues 25–233 is interaction with GRB2, ERI3 and SYN1; sequence KKRPKPGGGW…ESEAYYQRRA (209 aa). The tract at residues 28–110 is disordered; sequence PKPGGGWNTG…QWNKPSKPKT (83 aa). Repeat copies occupy residues 54-62, 63-70, 71-78, 79-86, and 87-95. Residues 54-95 are 5 X 8 AA tandem repeats of P-H-G-G-G-W-G-Q; sequence PQGGGGWGQPHGGGWGQPHGGGWGQPHGGGWGQPHGGGGWGQ. A compositionally biased stretch (gly residues) spans 55 to 97; that stretch reads QGGGGWGQPHGGGWGQPHGGGWGQPHGGGWGQPHGGGGWGQGG. Cu(2+) contacts are provided by H64, G65, G66, H72, G73, G74, H80, G81, G82, H88, G90, and G91. The cysteines at positions 182 and 217 are disulfide-linked. N-linked (GlcNAc...) asparagine glycans are attached at residues N184 and N200. The GPI-anchor amidated alanine moiety is linked to residue A233. A propeptide spans 234–256 (removed in mature form); it reads SAILFSSPPVILLISFLIFLIVG.

The protein belongs to the prion family. Monomer and homodimer. Has a tendency to aggregate into amyloid fibrils containing a cross-beta spine, formed by a steric zipper of superposed beta-strands. Soluble oligomers may represent an intermediate stage on the path to fibril formation. Copper binding may promote oligomerization. Interacts with GRB2, APP, ERI3/PRNPIP and SYN1. Mislocalized cytosolically exposed PrP interacts with MGRN1; this interaction alters MGRN1 subcellular location and causes lysosomal enlargement. Interacts with APP. Interacts with KIAA1191. Interacts with ADGRG6.

It localises to the cell membrane. It is found in the golgi apparatus. Its primary physiological function is unclear. May play a role in neuronal development and synaptic plasticity. May be required for neuronal myelin sheath maintenance. May promote myelin homeostasis through acting as an agonist for ADGRG6 receptor. May play a role in iron uptake and iron homeostasis. Soluble oligomers are toxic to cultured neuroblastoma cells and induce apoptosis (in vitro). Association with GPC1 (via its heparan sulfate chains) targets PRNP to lipid rafts. Also provides Cu(2+) or Zn(2+) for the ascorbate-mediated GPC1 deaminase degradation of its heparan sulfate side chains. The protein is Major prion protein (PRNP) of Felis catus (Cat).